Here is a 204-residue protein sequence, read N- to C-terminus: MAEGPSLHPKLQVDSNIPIEISSQIPQEPARNLAFQMRQSPLVTPGSTTKSSLSVPERNLLKQESQGPSRQSGCMLLSDKYVNKQTGPMASRKFRKERTVYTKEQQGLLQKHFDECQYPNKKKIVELALSVGVTKREIKIWFKNNRAKYRRMNLQNIEQVLPESNGSSKAVSESTHFPVVASDNGESMCSGTFGEDSIPKFNCS.

The segment at 28 to 73 (EPARNLAFQMRQSPLVTPGSTTKSSLSVPERNLLKQESQGPSRQSG) is disordered. Polar residues-rich tracts occupy residues 37-54 (MRQSPLVTPGSTTKSSLS) and 62-72 (KQESQGPSRQS). Positions 94 to 153 (FRKERTVYTKEQQGLLQKHFDECQYPNKKKIVELALSVGVTKREIKIWFKNNRAKYRRMN) form a DNA-binding region, homeobox.

This sequence belongs to the paired homeobox family. Obox subfamily. Specifically expressed in oocytes and early embryos.

Its subcellular location is the nucleus. Transcription factor required for zygotic genome activation (ZGA), a critical event in early embryonic development during which the developmental control passes from maternally provided mRNAs to the expression of the zygotic genome after fertilization. Together with other Obox family members, required in early two-cell stage embryos to kick-start the major ZGA wave by facilitating RNA Polymerase II 'pre-configuration', during which RNA Polymerase II relocates from the initial one-cell stage binding targets to ZGA gene promoters and distal enhancers. Mechanistically, promotes recruitment of RNA Polymerase II from (CG-rich) non-ZGA genes to (CG-poor) ZGA genes at the two-cell stage. Binds to regulatory DNA sequences containing a 5'-ACNCCTTTAATCCCAG-3' sequence motif. Most maternal and zygotic Obox family proteins can compensate for one another. In addition to its role in ZGA, promotes embryonic stem cell pluripotency. The protein is Oocyte-specific homeobox protein 1 of Mus musculus (Mouse).